Reading from the N-terminus, the 361-residue chain is tRNA-specific 2-thiouridylase MnmA (361 aa).

ATP contacts are provided by residues 9–16 (GMSGGVDS) and M35. An interaction with target base in tRNA region spans residues 95–97 (NPD). The Nucleophile role is filled by C100. A disulfide bridge links C100 with C196. G124 is a binding site for ATP. An interaction with tRNA region spans residues 146-148 (KDQ). C196 functions as the Cysteine persulfide intermediate in the catalytic mechanism. An interaction with tRNA region spans residues 308 to 309 (RY).

It belongs to the MnmA/TRMU family.

The protein resides in the cytoplasm. The catalysed reaction is S-sulfanyl-L-cysteinyl-[protein] + uridine(34) in tRNA + AH2 + ATP = 2-thiouridine(34) in tRNA + L-cysteinyl-[protein] + A + AMP + diphosphate + H(+). Catalyzes the 2-thiolation of uridine at the wobble position (U34) of tRNA, leading to the formation of s(2)U34. This chain is tRNA-specific 2-thiouridylase MnmA, found in Nitrosomonas eutropha (strain DSM 101675 / C91 / Nm57).